We begin with the raw amino-acid sequence, 105 residues long: uncharacterized protein (105 aa).

A disordered region spans residues 22–105 (GSAGHGATEA…KKRIIKGKVM (84 aa)). The segment covering 61–83 (HDSRPARGDARKRHCQENNKTDR) has biased composition (basic and acidic residues). The segment covering 93–105 (NRRKKRIIKGKVM) has biased composition (basic residues).

This is an uncharacterized protein from Escherichia coli (strain K12).